Reading from the N-terminus, the 429-residue chain is MLSMQVVSLISLLVSVCLAQPLPLSKRYFEYENYKVRGVNLGGWLVLEPFITPSLFETFRTNEYNDDGIPYDEYHYCQYLGEDLARDRLKQHWSTWITEADFEDISNTGLNTVRIPIGYWAFELLDDDPYVSGLQEAYLDQAIEWARSYGLKVWVDLHGAPGSQNGFDNSGLRDQVEFQQDGNWDVFKNVLAYVIEKYSRDEFTDTVVGVEVLNEPLGPVIDMDKLKELYNWAYDYLRNDLQRDQILVIHDAFQKANYFDDQLTVEQGAFGVLVDHHHYQVFSPEEVGRTIDEHISVVCEQGKETLTEAHWNVVGEWSAALTDCTKWLNGVGIGARYDGSFVKNQDTSYWIGSCEGSQDISTWTSDKKDNYRKYIEAQLDAYEIRNGWIYWCYKTEDTLEWDYRKLVQSGLFPQPLTNRQFPNQCSSTY.

The first 19 residues, 1 to 19 (MLSMQVVSLISLLVSVCLA), serve as a signal peptide directing secretion. Positions 20–27 (QPLPLSKR) are excised as a propeptide. Residue E215 is the Proton donor of the active site. 2 disulfide bridges follow: C299–C425 and C324–C354. The active-site Nucleophile is E316.

This sequence belongs to the glycosyl hydrolase 5 (cellulase A) family.

It is found in the secreted. The enzyme catalyses Successive hydrolysis of beta-D-glucose units from the non-reducing ends of (1-&gt;3)-beta-D-glucans, releasing alpha-glucose.. In terms of biological role, beta-glucanases participate in the metabolism of beta-glucan, the main structural component of the cell wall. It could also function biosynthetically as a transglycosylase. In Kluyveromyces lactis (strain ATCC 8585 / CBS 2359 / DSM 70799 / NBRC 1267 / NRRL Y-1140 / WM37) (Yeast), this protein is Glucan 1,3-beta-glucosidase.